The chain runs to 793 residues: Probable serine/threonine-protein kinase fnkA (793 aa).

The Protein kinase domain maps to 11 to 358 (WEILSQLGTG…IINLISHNFI (348 aa)). ATP-binding positions include 17 to 25 (LGTGAFGRV) and Lys-46. Residue Asp-138 is the Proton acceptor of the active site. FNIP repeat units follow at residues 403-444 (FNQT…FGAR), 470-514 (YNQP…ILGD), 515-557 (YDQK…LGYR), 558-601 (FNKA…LGYC), and 691-733 (FIRP…LGSR).

It belongs to the protein kinase superfamily. STE Ser/Thr protein kinase family. Mg(2+) serves as cofactor.

It carries out the reaction L-seryl-[protein] + ATP = O-phospho-L-seryl-[protein] + ADP + H(+). It catalyses the reaction L-threonyl-[protein] + ATP = O-phospho-L-threonyl-[protein] + ADP + H(+). In Dictyostelium discoideum (Social amoeba), this protein is Probable serine/threonine-protein kinase fnkA.